The primary structure comprises 69 residues: Cytochrome c oxidase subunit 8A, mitochondrial (69 aa).

The N-terminal 25 residues, 1 to 25 (MSVLTSLLLRGLTGSARRLPVPRAK), are a transit peptide targeting the mitochondrion. Positions 2-19 (SVLTSLLLRGLTGSARRL) match the SIFI-degron motif. Over 26–36 (VHSMPPEEELG) the chain is Mitochondrial matrix. A helical membrane pass occupies residues 37–60 (TLEKAIALTSCFVSLFLPAGWILS). The Mitochondrial intermembrane portion of the chain corresponds to 61 to 69 (HLEDYKRPE).

The protein belongs to the cytochrome c oxidase VIII family. In terms of assembly, component of the cytochrome c oxidase (complex IV, CIV), a multisubunit enzyme composed of 14 subunits. The complex is composed of a catalytic core of 3 subunits MT-CO1, MT-CO2 and MT-CO3, encoded in the mitochondrial DNA, and 11 supernumerary subunits COX4I, COX5A, COX5B, COX6A, COX6B, COX6C, COX7A, COX7B, COX7C, COX8 and NDUFA4, which are encoded in the nuclear genome. The complex exists as a monomer or a dimer and forms supercomplexes (SCs) in the inner mitochondrial membrane with NADH-ubiquinone oxidoreductase (complex I, CI) and ubiquinol-cytochrome c oxidoreductase (cytochrome b-c1 complex, complex III, CIII), resulting in different assemblies (supercomplex SCI(1)III(2)IV(1) and megacomplex MCI(2)III(2)IV(2)). In response to mitochondrial stress, the precursor protein is ubiquitinated by the SIFI complex in the cytoplasm before mitochondrial import, leading to its degradation. Within the SIFI complex, UBR4 initiates ubiquitin chain that are further elongated or branched by KCMF1.

The protein localises to the mitochondrion inner membrane. It participates in energy metabolism; oxidative phosphorylation. In terms of biological role, component of the cytochrome c oxidase, the last enzyme in the mitochondrial electron transport chain which drives oxidative phosphorylation. The respiratory chain contains 3 multisubunit complexes succinate dehydrogenase (complex II, CII), ubiquinol-cytochrome c oxidoreductase (cytochrome b-c1 complex, complex III, CIII) and cytochrome c oxidase (complex IV, CIV), that cooperate to transfer electrons derived from NADH and succinate to molecular oxygen, creating an electrochemical gradient over the inner membrane that drives transmembrane transport and the ATP synthase. Cytochrome c oxidase is the component of the respiratory chain that catalyzes the reduction of oxygen to water. Electrons originating from reduced cytochrome c in the intermembrane space (IMS) are transferred via the dinuclear copper A center (CU(A)) of subunit 2 and heme A of subunit 1 to the active site in subunit 1, a binuclear center (BNC) formed by heme A3 and copper B (CU(B)). The BNC reduces molecular oxygen to 2 water molecules using 4 electrons from cytochrome c in the IMS and 4 protons from the mitochondrial matrix. The polypeptide is Cytochrome c oxidase subunit 8A, mitochondrial (COX8A) (Papio anubis (Olive baboon)).